A 403-amino-acid polypeptide reads, in one-letter code: Probable tRNA sulfurtransferase (403 aa).

In terms of domain architecture, THUMP spans 61-166 (EAIAESLKDV…SGYSYIMCDE (106 aa)). Residues 184–185 (LL), 209–210 (HF), Arg-266, Gly-288, and Gln-297 contribute to the ATP site.

It belongs to the ThiI family.

Its subcellular location is the cytoplasm. It catalyses the reaction [ThiI sulfur-carrier protein]-S-sulfanyl-L-cysteine + a uridine in tRNA + 2 reduced [2Fe-2S]-[ferredoxin] + ATP + H(+) = [ThiI sulfur-carrier protein]-L-cysteine + a 4-thiouridine in tRNA + 2 oxidized [2Fe-2S]-[ferredoxin] + AMP + diphosphate. The catalysed reaction is [ThiS sulfur-carrier protein]-C-terminal Gly-Gly-AMP + S-sulfanyl-L-cysteinyl-[cysteine desulfurase] + AH2 = [ThiS sulfur-carrier protein]-C-terminal-Gly-aminoethanethioate + L-cysteinyl-[cysteine desulfurase] + A + AMP + 2 H(+). It participates in cofactor biosynthesis; thiamine diphosphate biosynthesis. In terms of biological role, catalyzes the ATP-dependent transfer of a sulfur to tRNA to produce 4-thiouridine in position 8 of tRNAs, which functions as a near-UV photosensor. Also catalyzes the transfer of sulfur to the sulfur carrier protein ThiS, forming ThiS-thiocarboxylate. This is a step in the synthesis of thiazole, in the thiamine biosynthesis pathway. The sulfur is donated as persulfide by IscS. In Bacillus cytotoxicus (strain DSM 22905 / CIP 110041 / 391-98 / NVH 391-98), this protein is Probable tRNA sulfurtransferase.